Here is a 662-residue protein sequence, read N- to C-terminus: Carboxysome assembly protein CsoS2 (662 aa).

The N-terminal domain stretch occupies residues 1–227 (MSTSNAQSGR…KRRNAKEAPQ (227 aa)). 3 disordered regions span residues 1–258 (MSTS…SESG), 277–322 (NCDV…TCSA), and 342–419 (PAKS…RGSC). One copy of the N-repeat 1 repeat lies at 8–27 (SGRAAAIARRNAQVKGKGYT). Composition is skewed to low complexity over residues 28-57 (ASAAPAAPRKPAAPVAEPVVAAAPAPSQPS) and 64-76 (SVAPTATPAASAA). Residues 58-72 (RSRRKVSVAPTATPA) form an N-repeat 2 repeat. Residues 120–135 (RQAKAEKPTKRSERRT) are compositionally biased toward basic and acidic residues. Polar residues predominate over residues 141 to 150 (VASQQPSGRL). The stretch at 147–168 (SGRLQSKAYRKAQAKGKAGQEA) is one N-repeat 3 repeat. Composition is skewed to low complexity over residues 161-170 (KGKAGQEAFK), 237-247 (GQSVSGTQVGQ), and 289-300 (VTQTQTTRGQVV). M-repeat repeat units lie at residues 228–278 (KVGE…SKNC), 288–338 (KVTQ…KMYC), 388–436 (KVMP…AKAC), 446–491 (KVTA…TEQF), and 496–550 (VDEQ…AMVC). The tract at residues 228-559 (KVGESQTLHG…CDSTNAAAPG (332 aa)) is middle region. A compositionally biased stretch (polar residues) spans 391-404 (PSQTAKGNTTTGSQ). Residues 560–631 (ESDFPAMIGQ…SPMGASQYRP (72 aa)) form a C-terminal domain region. One copy of the C-repeat 1 repeat lies at 564 to 572 (PAMIGQAQP). Disordered regions lie at residues 588–607 (KITGDGWDRGSKVTGTDGPW) and 619–662 (AGQS…GARA). Residues 632-662 (VNNEVPMSPITGSSGNTDTGAKVTLSGGARA) form a C-terminal peptide region. The span at 641–650 (ITGSSGNTDT) shows a compositional bias: polar residues.

Belongs to the CsoS2 family. In terms of assembly, interacts via its N-terminal repeats with RuBisCO. Interacts with the major shell protein CsoS1. Post-translationally, unlike H.neapolitanus and predictions for P.marinus strain MIT 9313, this protein is not thought to have ribosomal frameshifting.

The protein resides in the carboxysome. Functionally, required for alpha-carboxysome (Cb) assembly, mediates interaction between RuBisCO and the Cb shell. The protein is probably intrinsically disordered. The C-terminal repeats act as the encapsulation signal to target proteins to the Cb; they are necessary and sufficient to target both CsoS2 and foreign proteins to the Cb. The N-terminal repeats of this protein bind simultaneously to both subunits of RuBisCO. Probably also interacts with the major shell proteins (CsoS1); that interaction would increase the local concentration of CsoS2 so that it can condense RuBisCO and full carboxysomes can be formed. This chain is Carboxysome assembly protein CsoS2, found in Hydrogenovibrio crunogenus (strain DSM 25203 / XCL-2) (Thiomicrospira crunogena).